A 298-amino-acid polypeptide reads, in one-letter code: Inosose dehydratase (298 aa).

It belongs to the IolE/MocC family. It depends on glutathione as a cofactor. Requires Co(2+) as cofactor. The cofactor is Mn(2+).

It catalyses the reaction scyllo-inosose = 3D-3,5/4-trihydroxycyclohexane-1,2-dione + H2O. Catalyzes the dehydration of inosose (2-keto-myo-inositol, 2KMI or 2,4,6/3,5-pentahydroxycyclohexanone) to 3D-(3,5/4)-trihydroxycyclohexane-1,2-dione (D-2,3-diketo-4-deoxy-epi-inositol). The protein is Inosose dehydratase of Serratia proteamaculans (strain 568).